A 2346-amino-acid polypeptide reads, in one-letter code: Acetyl-CoA carboxylase 1 (2346 aa).

Met1 bears the N-acetylmethionine mark. A phosphoserine mark is found at Ser5, Ser23, Ser25, Ser29, Ser34, Ser48, Ser50, and Ser53. The residue at position 58 (Thr58) is a Phosphothreonine. Phosphoserine is present on Ser78. Ser80 carries the post-translational modification Phosphoserine; by AMPK. The Biotin carboxylation domain occupies 117 to 618 (VIEKVLIANN…DTGWLDRLIA (502 aa)). Positions 275 to 466 (SKRILNVPQE…LPAAQLQIAM (192 aa)) constitute an ATP-grasp domain. 315 to 320 (GGGGKG) is a binding site for ATP. Residues Glu424, Glu437, and Asn439 each contribute to the Mg(2+) site. Residues Glu424, Glu437, and Asn439 each coordinate Mn(2+). Residue Arg441 is part of the active site. Phosphothreonine is present on Thr610. The Biotinyl-binding domain maps to 745 to 819 (FEKENDPSVL…DPGCVIAKMQ (75 aa)). Position 786 is an N6-biotinyllysine (Lys786). 4 positions are modified to phosphoserine: Ser835, Ser1201, Ser1216, and Ser1218. Thr1227 carries the post-translational modification Phosphothreonine. Residues Ser1259, Ser1263, and Ser1273 each carry the phosphoserine modification. Lys1334 carries the N6-acetyllysine modification. Residues 1576–1914 (PYVTKDLLQS…SVYSSVPLLN (339 aa)) enclose the CoA carboxyltransferase N-terminal domain. The interval 1576-2234 (PYVTKDLLQS…EDLVKKKIHN (659 aa)) is carboxyltransferase. Residues Arg1823, Lys2127, and Arg2129 each contribute to the CoA site. Positions 1918–2234 (PIDRVIEFVP…EDLVKKKIHN (317 aa)) constitute a CoA carboxyltransferase C-terminal domain. Phosphothreonine is present on Thr2153.

As to quaternary structure, monomer, homodimer, and homotetramer. Can form filamentous polymers. Interacts in its inactive phosphorylated form with the BRCT domains of BRCA1 which prevents ACACA dephosphorylation and inhibits lipid synthesis. Interacts with MID1IP1; interaction with MID1IP1 promotes oligomerization and increases its activity. It depends on Mg(2+) as a cofactor. Mn(2+) serves as cofactor. Requires biotin as cofactor. Phosphorylation on Ser-1263 is required for interaction with BRCA1. In terms of processing, phosphorylation at Ser-80 by AMPK inactivates enzyme activity. Post-translationally, the biotin cofactor is covalently attached to the central biotinyl-binding domain and is required for the catalytic activity. In terms of tissue distribution, expressed at high levels in mammary gland.

It is found in the cytoplasm. Its subcellular location is the cytosol. It carries out the reaction hydrogencarbonate + acetyl-CoA + ATP = malonyl-CoA + ADP + phosphate + H(+). The protein operates within lipid metabolism; malonyl-CoA biosynthesis; malonyl-CoA from acetyl-CoA: step 1/1. With respect to regulation, inhibited by phosphorylation. Citrate promotes oligomerization of the protein into filaments that correspond to the most active form of the carboxylase. Cytosolic enzyme that catalyzes the carboxylation of acetyl-CoA to malonyl-CoA, the first and rate-limiting step of de novo fatty acid biosynthesis. This is a 2 steps reaction starting with the ATP-dependent carboxylation of the biotin carried by the biotin carboxyl carrier (BCC) domain followed by the transfer of the carboxyl group from carboxylated biotin to acetyl-CoA. The protein is Acetyl-CoA carboxylase 1 of Ovis aries (Sheep).